A 790-amino-acid polypeptide reads, in one-letter code: Choline transporter-like 2 (790 aa).

Residues 47–67 (PCLFLFVTFLCAWGYVAYYAV) traverse the membrane as a helical segment. N-linked (GlcNAc...) asparagine glycosylation is found at asparagine 102 and asparagine 259. Transmembrane regions (helical) follow at residues 288 to 308 (IITP…FQMI), 319 to 339 (ILVF…MLRW), and 344 to 364 (LVWI…YYSF). N-linked (GlcNAc...) asparagine glycosylation occurs at asparagine 384. Transmembrane regions (helical) follow at residues 400–420 (LWIL…VLVL) and 449–469 (LVPW…LLFL). An N-linked (GlcNAc...) asparagine glycan is attached at asparagine 483. Transmembrane regions (helical) follow at residues 545–565 (VIGF…VLAF), 592–612 (VYYH…CKII), 691–711 (VTGF…AAVT), and 728–748 (FVPA…FFSV).

This sequence belongs to the CTL (choline transporter-like) family.

The protein localises to the membrane. The protein is Choline transporter-like 2 of Anopheles gambiae (African malaria mosquito).